The primary structure comprises 234 residues: Purine nucleoside phosphorylase DeoD-type (234 aa).

Residue His-5 participates in a purine D-ribonucleoside binding. Phosphate contacts are provided by residues Gly-21, Arg-25, Arg-44, and Arg-88–Thr-91. A purine D-ribonucleoside contacts are provided by residues Asp-180–Glu-182 and Ser-204–Asp-205. Catalysis depends on Asp-205, which acts as the Proton donor.

It belongs to the PNP/UDP phosphorylase family. Homohexamer; trimer of homodimers.

It catalyses the reaction a purine D-ribonucleoside + phosphate = a purine nucleobase + alpha-D-ribose 1-phosphate. It carries out the reaction a purine 2'-deoxy-D-ribonucleoside + phosphate = a purine nucleobase + 2-deoxy-alpha-D-ribose 1-phosphate. In terms of biological role, catalyzes the reversible phosphorolytic breakdown of the N-glycosidic bond in the beta-(deoxy)ribonucleoside molecules, with the formation of the corresponding free purine bases and pentose-1-phosphate. In Buchnera aphidicola subsp. Acyrthosiphon pisum (strain APS) (Acyrthosiphon pisum symbiotic bacterium), this protein is Purine nucleoside phosphorylase DeoD-type.